The chain runs to 484 residues: Hexokinase-1 (484 aa).

Residues lysine 25–alanine 465 form the Hexokinase domain. A hexokinase small subdomain region spans residues aspartate 79 to leucine 212. Aspartate 90–asparagine 95 contributes to the ATP binding site. Substrate contacts are provided by residues serine 160–tyrosine 161, threonine 177–lysine 178, and serine 213–aspartate 214. The interval serine 213–aspartate 454 is hexokinase large subdomain. Threonine 237 contributes to the ATP binding site. Substrate-binding residues include asparagine 240, glutamate 269, and glutamate 302. ATP contacts are provided by residues glycine 307–cysteine 308, threonine 344–serine 348, and serine 419–leucine 423.

It belongs to the hexokinase family. In terms of assembly, monomer.

The enzyme catalyses a D-hexose + ATP = a D-hexose 6-phosphate + ADP + H(+). The catalysed reaction is D-mannose + ATP = D-mannose 6-phosphate + ADP + H(+). It carries out the reaction D-fructose + ATP = D-fructose 6-phosphate + ADP + H(+). It catalyses the reaction D-glucose + ATP = D-glucose 6-phosphate + ADP + H(+). It functions in the pathway carbohydrate metabolism; hexose metabolism. The protein operates within carbohydrate degradation; glycolysis; D-glyceraldehyde 3-phosphate and glycerone phosphate from D-glucose: step 1/4. In terms of biological role, catalyzes the phosphorylation of hexose (six-carbon sugars) to hexose 6-phosphate. Phosphorylates D-fructose, D-mannose and, to a lower extent, D-glucose. Compared to hxk2, has low affinity for D-glucose. This chain is Hexokinase-1, found in Schizosaccharomyces pombe (strain 972 / ATCC 24843) (Fission yeast).